A 126-amino-acid polypeptide reads, in one-letter code: Large ribosomal subunit protein bL20c (126 aa).

The protein belongs to the bacterial ribosomal protein bL20 family.

Its subcellular location is the plastid. The protein resides in the chloroplast. Functionally, binds directly to 23S ribosomal RNA and is necessary for the in vitro assembly process of the 50S ribosomal subunit. It is not involved in the protein synthesizing functions of that subunit. In Pelargonium hortorum (Common geranium), this protein is Large ribosomal subunit protein bL20c.